Reading from the N-terminus, the 396-residue chain is Mannonate dehydratase (396 aa).

Belongs to the mannonate dehydratase family. It depends on Fe(2+) as a cofactor. Mn(2+) is required as a cofactor.

The catalysed reaction is D-mannonate = 2-dehydro-3-deoxy-D-gluconate + H2O. It participates in carbohydrate metabolism; pentose and glucuronate interconversion. Functionally, catalyzes the dehydration of D-mannonate. This chain is Mannonate dehydratase, found in Serratia proteamaculans (strain 568).